The following is a 169-amino-acid chain: Ribosome maturation factor RimM (169 aa).

Positions 94 to 168 (DDEFYHADLI…RIVADPPEGL (75 aa)) constitute a PRC barrel domain.

This sequence belongs to the RimM family. As to quaternary structure, binds ribosomal protein uS19.

The protein localises to the cytoplasm. Functionally, an accessory protein needed during the final step in the assembly of 30S ribosomal subunit, possibly for assembly of the head region. Essential for efficient processing of 16S rRNA. May be needed both before and after RbfA during the maturation of 16S rRNA. It has affinity for free ribosomal 30S subunits but not for 70S ribosomes. The protein is Ribosome maturation factor RimM of Cereibacter sphaeroides (strain ATCC 17023 / DSM 158 / JCM 6121 / CCUG 31486 / LMG 2827 / NBRC 12203 / NCIMB 8253 / ATH 2.4.1.) (Rhodobacter sphaeroides).